The following is a 200-amino-acid chain: Potassium-transporting ATPase KdpC subunit (200 aa).

Residues 13–33 traverse the membrane as a helical segment; it reads ITLIFWLITAIIYPLAILVVG.

Belongs to the KdpC family. The system is composed of three essential subunits: KdpA, KdpB and KdpC.

It localises to the cell membrane. In terms of biological role, part of the high-affinity ATP-driven potassium transport (or Kdp) system, which catalyzes the hydrolysis of ATP coupled with the electrogenic transport of potassium into the cytoplasm. This subunit acts as a catalytic chaperone that increases the ATP-binding affinity of the ATP-hydrolyzing subunit KdpB by the formation of a transient KdpB/KdpC/ATP ternary complex. The chain is Potassium-transporting ATPase KdpC subunit from Anabaena sp. (strain L31).